The primary structure comprises 396 residues: Argininosuccinate synthase (396 aa).

9 to 17 (AYSGGLDTS) contributes to the ATP binding site. Position 85 (Y85) interacts with L-citrulline. G115 lines the ATP pocket. L-aspartate-binding residues include T117, N121, and D122. N121 provides a ligand contact to L-citrulline. The L-citrulline site is built by R125, S173, E258, and Y270.

Belongs to the argininosuccinate synthase family. Type 1 subfamily. As to quaternary structure, homotetramer.

The protein resides in the cytoplasm. It carries out the reaction L-citrulline + L-aspartate + ATP = 2-(N(omega)-L-arginino)succinate + AMP + diphosphate + H(+). It functions in the pathway amino-acid biosynthesis; L-arginine biosynthesis; L-arginine from L-ornithine and carbamoyl phosphate: step 2/3. The protein is Argininosuccinate synthase of Streptococcus agalactiae serotype Ia (strain ATCC 27591 / A909 / CDC SS700).